Consider the following 268-residue polypeptide: Phosphate import ATP-binding protein PstB 2 (268 aa).

The region spanning 22 to 263 (MALTGVNFYY…PKVKRTEDYI (242 aa)) is the ABC transporter domain. 54 to 61 (GPSGCGKS) is a binding site for ATP.

It belongs to the ABC transporter superfamily. Phosphate importer (TC 3.A.1.7) family. The complex is composed of two ATP-binding proteins (PstB), two transmembrane proteins (PstC and PstA) and a solute-binding protein (PstS).

Its subcellular location is the cell inner membrane. It catalyses the reaction phosphate(out) + ATP + H2O = ADP + 2 phosphate(in) + H(+). Its function is as follows. Part of the ABC transporter complex PstSACB involved in phosphate import. Responsible for energy coupling to the transport system. This chain is Phosphate import ATP-binding protein PstB 2, found in Rhizobium johnstonii (strain DSM 114642 / LMG 32736 / 3841) (Rhizobium leguminosarum bv. viciae).